The chain runs to 968 residues: A disintegrin and metalloproteinase with thrombospondin motifs 1 (968 aa).

Disordered regions lie at residues 1 to 23 and 177 to 253; these read MQPKVPLGSRKQKPCSDMGDVQR and APAV…RKKR. The N-terminal stretch at 1-48 is a signal peptide; the sequence is MQPKVPLGSRKQKPCSDMGDVQRAARSRGSLSAHMLLLLLASITMLLC. Residues 49 to 253 constitute a propeptide that is removed on maturation; the sequence is ARGAHGRPTE…SGPGSIRKKR (205 aa). A Cysteine switch motif is present at residues 204 to 211; sequence AKCGVMDD. Cys206 is a binding site for Zn(2+). Polar residues predominate over residues 214–229; sequence LPTSDSRPESQNTRNQ. The 210-residue stretch at 259–468 folds into the Peptidase M12B domain; that stretch reads RYVETMLVAD…GHGECLMDKP (210 aa). Positions 262, 345, and 352 each coordinate Ca(2+). 4 disulfide bridges follow: Cys334–Cys386, Cys363–Cys368, Cys380–Cys463, and Cys418–Cys447. Zn(2+) is bound at residue His402. Glu403 is a catalytic residue. 2 residues coordinate Zn(2+): His406 and His412. Residues Cys463 and Asp466 each coordinate Ca(2+). The Disintegrin domain maps to 477–559; that stretch reads DLPGTLYDAN…TDMKHFATPV (83 aa). Intrachain disulfides connect Cys489/Cys512, Cys500/Cys522, Cys507/Cys541, and Cys535/Cys546. Asn548 carries N-linked (GlcNAc...) asparagine glycosylation. Residues 560–615 form the TSP type-1 1 domain; it reads HGSWGPWGPWGDCSRTCGGGVQYTMRECDNPVPKNGGKYCEGKRVRYRSCNIEDCP. 3 cysteine pairs are disulfide-bonded: Cys572–Cys609, Cys576–Cys614, and Cys587–Cys599. Residues Asn721, Asn765, and Asn783 are each glycosylated (N-linked (GlcNAc...) asparagine). Positions 726-850 are spacer; sequence KKMSGIVTST…YFMKKKTESF (125 aa). TSP type-1 domains are found at residues 855–911 and 912–968; these read TFSE…LPCP and HWQV…TQCS. Asn946 carries an N-linked (GlcNAc...) asparagine glycan.

The cofactor is Zn(2+). In terms of processing, the precursor is cleaved by a furin endopeptidase. Post-translationally, glycosylated. Can be O-fucosylated by POFUT2 on a serine or a threonine residue found within the consensus sequence C1-X(2)-(S/T)-C2-G of the TSP type-1 repeat domains where C1 and C2 are the first and second cysteine residue of the repeat, respectively. Fucosylated repeats can then be further glycosylated by the addition of a beta-1,3-glucose residue by the glucosyltransferase, B3GALTL. Fucosylation mediates the efficient secretion of ADAMTS family members. Can also be C-glycosylated with one or two mannose molecules on tryptophan residues within the consensus sequence W-X-X-W of the TPRs, and N-glycosylated. These other glycosylations can also facilitate secretion.

It localises to the secreted. The protein resides in the extracellular space. The protein localises to the extracellular matrix. Its function is as follows. Metalloprotease which cleaves aggrecan, a cartilage proteoglycan, at the '1691-Glu-|-Leu-1692' site (within the chondroitin sulfate attachment domain), and may be involved in its turnover. Also cleaves COMP. Has angiogenic inhibitor activity. May play a critical role in follicular rupture. This is A disintegrin and metalloproteinase with thrombospondin motifs 1 (Adamts1) from Mus musculus (Mouse).